Here is a 227-residue protein sequence, read N- to C-terminus: MTVGTLVASVLPATVFEDLAYAELYSDPPGLTPLPEEAPLIARSVAKRRNEFITVRHCARIALDQLGVPPAPILKGDKGEPCWPDGMVGSLTHCAGYRGAVVGRRDAVRSVGIDAEPHDVLPNGVLDAISLPAERADMPRTMPAALHWDRILFCAKEATYKAWFPLTKRWLGFEDAHITFETDSTGWTGRFVSRILIDGSTLSGPPLTTLRGRWSVERGLVLTAIVL.

CoA contacts are provided by residues R48, R56, 75–78, 92–93, and D114; these read KGDK and TH. Mg(2+)-binding residues include D114, A115, and E116. 3 residues coordinate CoA: E157, K161, and L171.

The protein belongs to the P-Pant transferase superfamily. It depends on Mg(2+) as a cofactor.

It carries out the reaction apo-[ACP] + CoA = holo-[ACP] + adenosine 3',5'-bisphosphate + H(+). Inhibited by the amidino-urea compound 1-[(2,6-diethylphenyl)-3-N-ethylcarbamimodoyl]urea (compound 8918). It acts by binding to the phosphopantetheine pocket in the active site. Inhibition by compound 8918 kills M.tuberculosis. Transfers the 4'-phosphopantetheine moiety from coenzyme A to a Ser of acyl-carrier-protein. Involved in post-translational modification of various type-I polyketide synthases required for the formation of both mycolic acids and lipid virulence factors. Acts on Pks13, Mas, PpsA, PpsB, PpsC and PpsD. Also acts on AcpM, the meromycolate extension acyl carrier protein. In addition, is involved in the activation of the acyl carrier protein MbtL and the nonribosomal peptides synthases MbtB and MbtE, which are involved in the biosynthesis of the siderophore mycobactin. In terms of biological role, required for the replication and survival of Mycobacterium during the acute and chronic phases of infection in mice. This Mycobacterium tuberculosis (strain ATCC 25618 / H37Rv) protein is 4'-phosphopantetheinyl transferase PptT.